The sequence spans 216 residues: 3-isopropylmalate dehydratase small subunit (216 aa).

It belongs to the LeuD family. LeuD type 1 subfamily. As to quaternary structure, heterodimer of LeuC and LeuD.

The enzyme catalyses (2R,3S)-3-isopropylmalate = (2S)-2-isopropylmalate. The protein operates within amino-acid biosynthesis; L-leucine biosynthesis; L-leucine from 3-methyl-2-oxobutanoate: step 2/4. Catalyzes the isomerization between 2-isopropylmalate and 3-isopropylmalate, via the formation of 2-isopropylmaleate. This Polaromonas sp. (strain JS666 / ATCC BAA-500) protein is 3-isopropylmalate dehydratase small subunit.